A 270-amino-acid polypeptide reads, in one-letter code: MAPKVFYISDGTAITAEVFGHAVLSQFPLEFESLTIPFVETLTKAEQVKRQINDCFITTGERPLVFHSIVKAEIRDIIYSSEGLDYDFLNTFVAPLEQHLGVSASPVLHRTHGKANHGYEARIDAINFAMDNDDGQTMKHMDQADLVLLGVSRCGKTPSSLYLSMQFGIKAANYPFTEDDMDNLKLPDALKRNKKKLFGLTIDPVRLHEIRQSRMENSRYSSLKQCRLEVKEVEMLFKRERIPYIDTTNHSVEEIATKILDVTGLERHMF.

150–157 lines the ADP pocket; that stretch reads GVSRCGKT.

The protein belongs to the pyruvate, phosphate/water dikinase regulatory protein family. PSRP subfamily.

The enzyme catalyses [pyruvate, water dikinase] + ADP = [pyruvate, water dikinase]-phosphate + AMP + H(+). It carries out the reaction [pyruvate, water dikinase]-phosphate + phosphate + H(+) = [pyruvate, water dikinase] + diphosphate. Functionally, bifunctional serine/threonine kinase and phosphorylase involved in the regulation of the phosphoenolpyruvate synthase (PEPS) by catalyzing its phosphorylation/dephosphorylation. The protein is Putative phosphoenolpyruvate synthase regulatory protein of Shewanella baltica (strain OS223).